The chain runs to 323 residues: Ribose-phosphate pyrophosphokinase (323 aa).

ATP-binding positions include 38-40 (DGE) and 96-97 (RQ). 2 residues coordinate Mg(2+): His130 and Asp170. Lys193 is a catalytic residue. D-ribose 5-phosphate contacts are provided by residues Arg195, Asp219, and 223-227 (DTAGT).

This sequence belongs to the ribose-phosphate pyrophosphokinase family. Class I subfamily. In terms of assembly, homohexamer. The cofactor is Mg(2+).

Its subcellular location is the cytoplasm. It carries out the reaction D-ribose 5-phosphate + ATP = 5-phospho-alpha-D-ribose 1-diphosphate + AMP + H(+). Its pathway is metabolic intermediate biosynthesis; 5-phospho-alpha-D-ribose 1-diphosphate biosynthesis; 5-phospho-alpha-D-ribose 1-diphosphate from D-ribose 5-phosphate (route I): step 1/1. Its function is as follows. Involved in the biosynthesis of the central metabolite phospho-alpha-D-ribosyl-1-pyrophosphate (PRPP) via the transfer of pyrophosphoryl group from ATP to 1-hydroxyl of ribose-5-phosphate (Rib-5-P). This chain is Ribose-phosphate pyrophosphokinase, found in Chlorobaculum tepidum (strain ATCC 49652 / DSM 12025 / NBRC 103806 / TLS) (Chlorobium tepidum).